We begin with the raw amino-acid sequence, 118 residues long: Small ribosomal subunit protein bS6 (118 aa).

The protein belongs to the bacterial ribosomal protein bS6 family.

Functionally, binds together with bS18 to 16S ribosomal RNA. The protein is Small ribosomal subunit protein bS6 of Orientia tsutsugamushi (strain Ikeda) (Rickettsia tsutsugamushi).